Consider the following 174-residue polypeptide: Adenine phosphoribosyltransferase (174 aa).

This sequence belongs to the purine/pyrimidine phosphoribosyltransferase family. Homodimer.

The protein localises to the cytoplasm. The enzyme catalyses AMP + diphosphate = 5-phospho-alpha-D-ribose 1-diphosphate + adenine. The protein operates within purine metabolism; AMP biosynthesis via salvage pathway; AMP from adenine: step 1/1. In terms of biological role, catalyzes a salvage reaction resulting in the formation of AMP, that is energically less costly than de novo synthesis. This is Adenine phosphoribosyltransferase from Phocaeicola vulgatus (strain ATCC 8482 / DSM 1447 / JCM 5826 / CCUG 4940 / NBRC 14291 / NCTC 11154) (Bacteroides vulgatus).